We begin with the raw amino-acid sequence, 924 residues long: Nodulation receptor kinase (924 aa).

Positions 1–29 (MMELRVICIIRLVVACVLCLCIFIRSASS) are cleaved as a signal peptide. Residues 361–382 (EVIQKMRKELLLQNQDNEALES) adopt a coiled-coil conformation. LRR repeat units lie at residues 406–428 (VITK…VTEM), 430–452 (KLQI…PPSS), 453–475 (LLIS…IISL), and 477–498 (HLNS…AKLN). The chain crosses the membrane as a helical span at residues 520–540 (FMIGAITSGSILITLAVVILF). The Protein kinase domain maps to 595 to 872 (EKYKTLIGEG…IVRELEDALI (278 aa)). ATP-binding positions include 601–609 (IGEGGFGSV) and K623. The active-site Proton acceptor is the D721.

This sequence belongs to the protein kinase superfamily. Ser/Thr protein kinase family. In terms of processing, may be phosphorylated.

Its subcellular location is the membrane. The enzyme catalyses L-seryl-[protein] + ATP = O-phospho-L-seryl-[protein] + ADP + H(+). It carries out the reaction L-threonyl-[protein] + ATP = O-phospho-L-threonyl-[protein] + ADP + H(+). In terms of biological role, involved in the perception of symbiotic fungi and bacteria and required for the calcium spiking. Part of the perception/transduction system leading to nodulation or mycorrhizal infection. The polypeptide is Nodulation receptor kinase (NORK) (Pisum sativum (Garden pea)).